Consider the following 557-residue polypeptide: Large cysteine-rich periplasmic protein omcB (557 aa).

The N-terminal stretch at 1–22 (MSKLIRRVVTVLALTSMASSFA) is a signal peptide. Residues 23 to 40 (SGKIEAAAAESLATRFIA) constitute a propeptide that is removed on maturation.

Part of a disulfide cross-linked outer membrane complex (COMC) composed of the major outer membrane porin (MOMP), the small cysteine-rich protein (omcA) and the large cysteine-rich periplasmic protein (omcB).

It is found in the periplasm. Its function is as follows. In elementary bodies (EBs, the infectious stage, which is able to survive outside the host cell) provides the structural integrity of the outer envelope through disulfide cross-links with the small cysteine-rich protein and the major outer membrane porin. It has been described in publications as the Sarkosyl-insoluble COMC (Chlamydia outer membrane complex), and serves as the functional equivalent of peptidoglycan. The protein is Large cysteine-rich periplasmic protein omcB (omcB) of Chlamydophila psittaci (strain ATCC VR-125 / 6BC) (Chlamydia psittaci).